A 959-amino-acid polypeptide reads, in one-letter code: Translation initiation factor IF-2 (959 aa).

The span at 1 to 10 (MSDKTNDDKT) shows a compositional bias: basic and acidic residues. Positions 1–374 (MSDKTNDDKT…SQMQETREKI (374 aa)) are disordered. A compositionally biased stretch (polar residues) spans 27–37 (EQSTVRQNFSH). Composition is skewed to low complexity over residues 63–118 (AAAA…VTKP) and 128–138 (QRPGGQQAQRP). Composition is skewed to basic and acidic residues over residues 154-225 (SEMD…EAAK) and 232-241 (ARSERRDDAR). Residues 246-284 (GARPQQAGRPQGGRPQPAGRPQQGSPRPAPIIADAAPIA) show a composition bias toward low complexity. The span at 318 to 333 (PEVRAPKVVKGEDDRR) shows a compositional bias: basic and acidic residues. The tr-type G domain maps to 457-626 (SRPPVVTIMG…LLQAEMLDLK (170 aa)). The interval 466-473 (GHVDHGKT) is G1. 466-473 (GHVDHGKT) contributes to the GTP binding site. Residues 491 to 495 (GITQH) form a G2 region. Residues 512-515 (DTPG) are G3. GTP contacts are provided by residues 512 to 516 (DTPGH) and 566 to 569 (NKID). Residues 566–569 (NKID) form a G4 region. The tract at residues 602 to 604 (SAK) is G5.

This sequence belongs to the TRAFAC class translation factor GTPase superfamily. Classic translation factor GTPase family. IF-2 subfamily.

Its subcellular location is the cytoplasm. One of the essential components for the initiation of protein synthesis. Protects formylmethionyl-tRNA from spontaneous hydrolysis and promotes its binding to the 30S ribosomal subunits. Also involved in the hydrolysis of GTP during the formation of the 70S ribosomal complex. The sequence is that of Translation initiation factor IF-2 from Brucella abortus (strain 2308).